Reading from the N-terminus, the 237-residue chain is Ribonuclease PH (237 aa).

Residues R86 and 124-126 (GTR) contribute to the phosphate site.

The protein belongs to the RNase PH family. Homohexameric ring arranged as a trimer of dimers.

The enzyme catalyses tRNA(n+1) + phosphate = tRNA(n) + a ribonucleoside 5'-diphosphate. Phosphorolytic 3'-5' exoribonuclease that plays an important role in tRNA 3'-end maturation. Removes nucleotide residues following the 3'-CCA terminus of tRNAs; can also add nucleotides to the ends of RNA molecules by using nucleoside diphosphates as substrates, but this may not be physiologically important. Probably plays a role in initiation of 16S rRNA degradation (leading to ribosome degradation) during starvation. This chain is Ribonuclease PH, found in Nitrobacter hamburgensis (strain DSM 10229 / NCIMB 13809 / X14).